Consider the following 1470-residue polypeptide: RNA-directed RNA polymerase VP1 (1470 aa).

The tract at residues 28-55 is disordered; it reads AKQDQKENETTSNNKDTSSSVPKPSNFR. Residues 37 to 50 show a composition bias toward polar residues; the sequence is TTSNNKDTSSSVPK.

The catalysed reaction is RNA(n) + a ribonucleoside 5'-triphosphate = RNA(n+1) + diphosphate. RNA-directed RNA polymerase that is involved in transcription and genome replication. Following infection, it catalyzes the synthesis of fully conservative plus strands. After core assembly, which consists in recruitment of one capped plus-strand for each genomic segments and polymerase complexes, the polymerase switches mode and catalyzes the synthesis of complementary minus-strands. This chain is RNA-directed RNA polymerase VP1 (S1), found in Saccharum officinarum (Sugarcane).